We begin with the raw amino-acid sequence, 269 residues long: Fructose-2,6-bisphosphatase TIGAR (269 aa).

The active-site Tele-phosphohistidine intermediate is the His11. The Proton donor/acceptor role is filled by Glu89.

It belongs to the phosphoglycerate mutase family. Interacts with HK2; the interaction increases hexokinase HK2 activity in a hypoxia- and HIF1A-dependent manner, resulting in the regulation of mitochondrial membrane potential, thus increasing NADPH production and decreasing intracellular ROS levels. In terms of tissue distribution, expressed in olfactory bulb, cerebellum, and cortex. Expressed in neurons and astrocytes (at protein level). Expressed in intestinal crypt.

It localises to the cytoplasm. Its subcellular location is the nucleus. The protein localises to the mitochondrion. The enzyme catalyses beta-D-fructose 2,6-bisphosphate + H2O = beta-D-fructose 6-phosphate + phosphate. Its function is as follows. Fructose-bisphosphatase hydrolyzing fructose-2,6-bisphosphate as well as fructose-1,6-bisphosphate. Acts as a negative regulator of glycolysis by lowering intracellular levels of fructose-2,6-bisphosphate in a p53/TP53-dependent manner, resulting in the pentose phosphate pathway (PPP) activation and NADPH production. Contributes to the generation of reduced glutathione to cause a decrease in intracellular reactive oxygen species (ROS) content, correlating with its ability to protect cells from oxidative or metabolic stress-induced cell death. Plays a role in promoting protection against cell death during hypoxia by decreasing mitochondria ROS levels in a HK2-dependent manner through a mechanism that is independent of its fructose-bisphosphatase activity. In response to cardiac damage stress, mediates p53-induced inhibition of myocyte mitophagy through ROS levels reduction and the subsequent inactivation of BNIP3. Reduced mitophagy results in an enhanced apoptotic myocyte cell death, and exacerbates cardiac damage. Plays a role in adult intestinal regeneration; contributes to the growth, proliferation and survival of intestinal crypts following tissue ablation. Plays a neuroprotective role against ischemic brain damage by enhancing PPP flux and preserving mitochondria functions. Protects glioma cells from hypoxia- and ROS-induced cell death by inhibiting glycolysis and activating mitochondrial energy metabolism and oxygen consumption in a TKTL1-dependent and p53/TP53-independent manner. Plays a role in cancer cell survival by promoting DNA repair through activating PPP flux in a CDK5-ATM-dependent signaling pathway during hypoxia and/or genome stress-induced DNA damage responses. Involved in intestinal tumor progression. In Mus musculus (Mouse), this protein is Fructose-2,6-bisphosphatase TIGAR.